The sequence spans 178 residues: MRYLVPLLVFMVLGMGCLGGGGEEMVKVSSVFGNDEFIPAKYTCEGIDVNPPLRIEGISENAKSLVIIVDDPDAPLGTFTHWIAWNIPPVEEIPEGIPKQGEVEKPIHMIQGRNDFGRIGYNGPCPPRGHGVHHYHFKVYVLDTTLNLRPGATREELEKAMEGHIIQFGELVGLYERK.

Residues 1–22 (MRYLVPLLVFMVLGMGCLGGGG) form the signal peptide.

It belongs to the UPF0098 family.

This is UPF0098 protein PYRAB11530 from Pyrococcus abyssi (strain GE5 / Orsay).